The sequence spans 486 residues: tRNA (uracil-5-)-methyltransferase homolog B (486 aa).

3 residues coordinate S-adenosyl-L-methionine: Q305, E355, and N405. The Nucleophile role is filled by C433. Residue E479 is the Proton acceptor of the active site.

Belongs to the class I-like SAM-binding methyltransferase superfamily. RNA M5U methyltransferase family.

It localises to the mitochondrion matrix. The catalysed reaction is uridine(54) in tRNA + S-adenosyl-L-methionine = 5-methyluridine(54) in tRNA + S-adenosyl-L-homocysteine + H(+). It catalyses the reaction a uridine in 12S rRNA + S-adenosyl-L-methionine = a 5-methyluridine in 12S rRNA + S-adenosyl-L-homocysteine + H(+). Functionally, mitochondrial S-adenosyl-L-methionine-dependent methyltransferase that catalyzes the formation of 5-methyl-uridine in tRNAs and 12S rRNA. Catalyzes the methylation of uridine at position 54 (m5U54) in all tRNAs. Specifically methylates the uridine in position 429 of 12S rRNA (m5U429). Does not affect RNA stability or mitochondrial translation. The polypeptide is tRNA (uracil-5-)-methyltransferase homolog B (TRMT2B) (Pongo abelii (Sumatran orangutan)).